A 125-amino-acid polypeptide reads, in one-letter code: MIHGIGIDIVDIRKIKKIITHSGDKLATRILSKSEWKIYKNKKHPVHFLAKRFAAKEAVSKAFGTGINQGVTFNQIEIFNDKLGKPMLHLFSCTALLANKLSLKKMHITLSDTNSYACAFVILER.

2 residues coordinate Mg(2+): D8 and E57.

It belongs to the P-Pant transferase superfamily. AcpS family. The cofactor is Mg(2+).

Its subcellular location is the cytoplasm. It carries out the reaction apo-[ACP] + CoA = holo-[ACP] + adenosine 3',5'-bisphosphate + H(+). Functionally, transfers the 4'-phosphopantetheine moiety from coenzyme A to a Ser of acyl-carrier-protein. The sequence is that of Holo-[acyl-carrier-protein] synthase from Blochmanniella pennsylvanica (strain BPEN).